The following is a 373-amino-acid chain: Cobalt-precorrin-5B C(1)-methyltransferase (373 aa).

Belongs to the CbiD family.

The enzyme catalyses Co-precorrin-5B + S-adenosyl-L-methionine = Co-precorrin-6A + S-adenosyl-L-homocysteine. It functions in the pathway cofactor biosynthesis; adenosylcobalamin biosynthesis; cob(II)yrinate a,c-diamide from sirohydrochlorin (anaerobic route): step 6/10. Its function is as follows. Catalyzes the methylation of C-1 in cobalt-precorrin-5B to form cobalt-precorrin-6A. The sequence is that of Cobalt-precorrin-5B C(1)-methyltransferase from Listeria monocytogenes serotype 4a (strain HCC23).